Reading from the N-terminus, the 274-residue chain is MEALRQRIEAAFEARAEITPATVEPSVRADVEKAIAMLDTGEARVAEKINGEWHVHQWLKKAVLLSFRIFDNGVIEGAETKYFDKVPMKFADYDEARFRKEAIRVVPPAAVRKGSFIGKNTVLMPSYVNLGAFVDEGTMVDTWATVGSCAQIGKNVHLSGGVGIGGVLEPLQAGPTIIEDNCFIGARSEIVEGVIVEEGSVISMGVYIGQSTRIFDRETGEVHYGRVPAGSVVVAGNLPSKCGTYSLYAAIIVKKVDAKTRGKVGINELLRIVD.

Substrate contacts are provided by Arg104 and Asp141.

It belongs to the transferase hexapeptide repeat family. As to quaternary structure, homotrimer.

It localises to the cytoplasm. The catalysed reaction is (S)-2,3,4,5-tetrahydrodipicolinate + succinyl-CoA + H2O = (S)-2-succinylamino-6-oxoheptanedioate + CoA. The protein operates within amino-acid biosynthesis; L-lysine biosynthesis via DAP pathway; LL-2,6-diaminopimelate from (S)-tetrahydrodipicolinate (succinylase route): step 1/3. The sequence is that of 2,3,4,5-tetrahydropyridine-2,6-dicarboxylate N-succinyltransferase from Shewanella pealeana (strain ATCC 700345 / ANG-SQ1).